Reading from the N-terminus, the 407-residue chain is Zinc finger protein 174 (407 aa).

A disordered region spans residues 1–20; it reads MAAKMEITLSSNTEASSKQE. K26 is covalently cross-linked (Glycyl lysine isopeptide (Lys-Gly) (interchain with G-Cter in SUMO2)). Residues 59–124 enclose the SCAN box domain; that stretch reads GPQEALSQLR…KEIVTLVEDF (66 aa). Residues 150–270 are disordered; it reads GSQLGEQELP…RRQVSSPNAQ (121 aa). K204 is covalently cross-linked (Glycyl lysine isopeptide (Lys-Gly) (interchain with G-Cter in SUMO2)). Positions 211-221 are enriched in basic and acidic residues; the sequence is PRMRSDNKENP. Glycyl lysine isopeptide (Lys-Gly) (interchain with G-Cter in SUMO2) cross-links involve residues K230 and K271. 3 consecutive C2H2-type zinc fingers follow at residues 326–348, 354–376, and 382–405; these read YKCD…KRVH, YTCG…QRIH, and YQCG…RLHH.

The protein belongs to the krueppel C2H2-type zinc-finger protein family. Homodimer. Expressed in a variety of organs, but most strongly in adult testis and ovary followed by small intestine, colon, prostate, thymus, spleen, pancreas, skeletal muscle, heart, brain and kidney. Also expressed in umbilical vein endothelial cells, foreskin fibroblast and Hep-G2 cells.

Its subcellular location is the nucleus. Functionally, transcriptional repressor. The chain is Zinc finger protein 174 (ZNF174) from Homo sapiens (Human).